The primary structure comprises 300 residues: UDP-3-O-acyl-N-acetylglucosamine deacetylase (300 aa).

Positions 78, 237, and 241 each coordinate Zn(2+). H264 serves as the catalytic Proton donor.

Belongs to the LpxC family. The cofactor is Zn(2+).

The enzyme catalyses a UDP-3-O-[(3R)-3-hydroxyacyl]-N-acetyl-alpha-D-glucosamine + H2O = a UDP-3-O-[(3R)-3-hydroxyacyl]-alpha-D-glucosamine + acetate. Its pathway is glycolipid biosynthesis; lipid IV(A) biosynthesis; lipid IV(A) from (3R)-3-hydroxytetradecanoyl-[acyl-carrier-protein] and UDP-N-acetyl-alpha-D-glucosamine: step 2/6. In terms of biological role, catalyzes the hydrolysis of UDP-3-O-myristoyl-N-acetylglucosamine to form UDP-3-O-myristoylglucosamine and acetate, the committed step in lipid A biosynthesis. The chain is UDP-3-O-acyl-N-acetylglucosamine deacetylase from Acinetobacter baumannii (strain SDF).